Here is a 315-residue protein sequence, read N- to C-terminus: Olfactory receptor 3A1 (315 aa).

Over 1 to 28 (MQPESGANGTVIAEFILLGLLEAPGLQP) the chain is Extracellular. An N-linked (GlcNAc...) asparagine glycan is attached at Asn8. Residues 29–52 (VVFVLFLFAYLVTVGGNLSILAAV) form a helical membrane-spanning segment. The Cytoplasmic portion of the chain corresponds to 53–60 (LVEPKLHS). Residues 61–82 (PMYFFLGNLSVLDVGCISVTVP) form a helical membrane-spanning segment. The Extracellular portion of the chain corresponds to 83-103 (SMLSRLLSRKRAVPCGACLTQ). Cys100 and Cys192 form a disulfide bridge. Residues 104–123 (LFFFHLFVGVDCFLLTAMAY) form a helical membrane-spanning segment. The Cytoplasmic portion of the chain corresponds to 124–143 (DRFLAICRPLTYSTRMSQTV). A helical membrane pass occupies residues 144–161 (QRMLVAASWACAFTNALT). At 162-199 (HTVAMSTLNFCGPNEVNHFYCDLPQLFQLSCSSTQLNE) the chain is on the extracellular side. Residues 200–223 (LLLFAVGFIMAGTPMALIVISYIH) form a helical membrane-spanning segment. The Cytoplasmic portion of the chain corresponds to 224–240 (VAAAVLRIRSVEGRKKA). Residues 241 to 264 (FSTCGSHLTVVAMFYGSGIFNYMR) traverse the membrane as a helical segment. Residues 265-275 (LGSTKLSDKDK) are Extracellular-facing. The chain crosses the membrane as a helical span at residues 276–295 (AVGIFNTVINPMVNPIIYRF). Residues 296 to 315 (RNPEVQSAIWRMLTGRRSLA) lie on the Cytoplasmic side of the membrane.

The protein belongs to the G-protein coupled receptor 1 family.

It localises to the cell membrane. Functionally, odorant receptor. This Pan troglodytes (Chimpanzee) protein is Olfactory receptor 3A1 (OR3A1).